A 95-amino-acid chain; its full sequence is Aspartyl/glutamyl-tRNA(Asn/Gln) amidotransferase subunit C (95 aa).

This sequence belongs to the GatC family. In terms of assembly, heterotrimer of A, B and C subunits.

The enzyme catalyses L-glutamyl-tRNA(Gln) + L-glutamine + ATP + H2O = L-glutaminyl-tRNA(Gln) + L-glutamate + ADP + phosphate + H(+). The catalysed reaction is L-aspartyl-tRNA(Asn) + L-glutamine + ATP + H2O = L-asparaginyl-tRNA(Asn) + L-glutamate + ADP + phosphate + 2 H(+). Functionally, allows the formation of correctly charged Asn-tRNA(Asn) or Gln-tRNA(Gln) through the transamidation of misacylated Asp-tRNA(Asn) or Glu-tRNA(Gln) in organisms which lack either or both of asparaginyl-tRNA or glutaminyl-tRNA synthetases. The reaction takes place in the presence of glutamine and ATP through an activated phospho-Asp-tRNA(Asn) or phospho-Glu-tRNA(Gln). This is Aspartyl/glutamyl-tRNA(Asn/Gln) amidotransferase subunit C from Methylobacterium sp. (strain 4-46).